The following is a 774-amino-acid chain: Subtilisin-like protease SBT3.5 (774 aa).

Residues 1-23 (MRNCRVLLVLVLSLVIVLNVVRA) form the signal peptide. Residues 24–108 (SDESKVHIVY…VMADSFYELA (85 aa)) constitute a propeptide, removed in mature form. One can recognise an Inhibitor I9 domain in the interval 29 to 108 (VHIVYLGEKQ…VMADSFYELA (80 aa)). One can recognise a Peptidase S8 domain in the interval 112–621 (TWDYLGLSVA…GGIVNPEKAA (510 aa)). The N-linked (GlcNAc...) asparagine glycan is linked to Asn-128. Asp-142 acts as the Charge relay system in catalysis. An N-linked (GlcNAc...) asparagine glycan is attached at Asn-201. His-217 (charge relay system) is an active-site residue. Asn-232, Asn-394, Asn-409, and Asn-539 each carry an N-linked (GlcNAc...) asparagine glycan. The region spanning 383–478 (SLVYPENAGF…ELGTDVLLYI (96 aa)) is the PA domain. Ser-552 functions as the Charge relay system in the catalytic mechanism. N-linked (GlcNAc...) asparagine glycans are attached at residues Asn-644, Asn-654, Asn-725, and Asn-755.

It belongs to the peptidase S8 family. In terms of tissue distribution, expressed in roots, leaves, stems, flower buds, developing siliques and mature seeds.

It is found in the secreted. Its subcellular location is the cell wall. Functionally, serine protease that cleaves the pectin methylesterase 17 (PME17) protein to release the PME17 mature form in the apoplasm. This chain is Subtilisin-like protease SBT3.5, found in Arabidopsis thaliana (Mouse-ear cress).